The following is a 637-amino-acid chain: Chaperone protein HtpG (637 aa).

Residues 1 to 348 are a; substrate-binding; sequence MAEAGQMEKH…SNDLPLNVSR (348 aa). The interval 349–565 is b; the sequence is EILQDNKITR…DNDMSTQMAK (217 aa). Positions 566–637 are c; that stretch reads LMEAAGQAVP…TRLNKLMLNA (72 aa).

This sequence belongs to the heat shock protein 90 family. Homodimer.

It is found in the cytoplasm. Its function is as follows. Molecular chaperone. Has ATPase activity. In Idiomarina loihiensis (strain ATCC BAA-735 / DSM 15497 / L2-TR), this protein is Chaperone protein HtpG.